Consider the following 81-residue polypeptide: Large ribosomal subunit protein bL31B (81 aa).

It belongs to the bacterial ribosomal protein bL31 family. Type B subfamily. In terms of assembly, part of the 50S ribosomal subunit.

This Oceanobacillus iheyensis (strain DSM 14371 / CIP 107618 / JCM 11309 / KCTC 3954 / HTE831) protein is Large ribosomal subunit protein bL31B.